Here is a 380-residue protein sequence, read N- to C-terminus: Aprataxin (380 aa).

The region spanning 36-85 is the FHA-like domain; sequence PVIIGRTPELGITDKLCSRSQLELTSNCYKRYVLVKRLGANTSQINGIDI. A disordered region spans residues 176 to 207; it reads VYAFDSPSPMSSRCEKKAESNKRAPTHKHWSQ. Residues 188 to 197 are compositionally biased toward basic and acidic residues; sequence RCEKKAESNK. Residues 206 to 312 enclose the HIT domain; sequence SQGLKASMED…ISQDFQSSSF (107 aa). Interaction with DNA substrate regions lie at residues 231–235 and 294–295; these read DKYPK and SM. A Histidine triad motif motif is present at residues 297–301; the sequence is QMHMH. His299 acts as the Tele-AMP-histidine intermediate in catalysis. A C2H2-type; atypical zinc finger spans residues 356–378; that stretch reads LKCHRCKKPQKNIPTLKKHIDSC.

The protein localises to the nucleus. It is found in the nucleoplasm. It localises to the nucleolus. The enzyme catalyses a 5'-end adenosine-5'-diphospho-5'-2'-deoxyribonucleoside-DNA + H2O = a 5'-end 5'-phospho-2'-deoxyribonucleoside-DNA + AMP + 2 H(+). It catalyses the reaction a 5'-end adenosine-5'-diphospho-5'-ribonucleoside-2'-deoxyribonucleotide-DNA + H2O = a 5'-end 5'-phospho-ribonucleoside-2'-deoxyribonucleotide-DNA + AMP + 2 H(+). It carries out the reaction a 3'-end 2'-deoxyribonucleotide-3'-diphospho-5'-guanosine-DNA + H2O = a 3'-end 2'-deoxyribonucleotide 3'-phosphate-DNA + GMP + 2 H(+). Its function is as follows. DNA-binding protein involved in single-strand DNA break repair, double-strand DNA break repair and base excision repair. Resolves abortive DNA ligation intermediates formed either at base excision sites, or when DNA ligases attempt to repair non-ligatable breaks induced by reactive oxygen species. Catalyzes the release of adenylate groups covalently linked to 5'-phosphate termini, resulting in the production of 5'-phosphate termini that can be efficiently rejoined. Also able to hydrolyze adenosine 5'-monophosphoramidate (AMP-NH(2)) and diadenosine tetraphosphate (AppppA), but with lower catalytic activity. Likewise, catalyzes the release of 3'-linked guanosine (DNAppG) and inosine (DNAppI) from DNA, but has higher specific activity with 5'-linked adenosine (AppDNA). The protein is Aprataxin (APTX) of Ciona intestinalis (Transparent sea squirt).